We begin with the raw amino-acid sequence, 220 residues long: MPLFQKAVFLTTVANLRDLPQDSVREVAFAGRSNAGKSSAINTLAGRVRLAFVSKTPGRTQHLNYFTLDEGKYFVDLPGYGYAKAPEAIRSQWEGLIGPYLSKRDQLAGLVVIMDIRRPMTDLDLRLIDWFRPTGRPIHILLSKSDKLSRQDQTKALRSVKAEVATWGDADLYSVQLFSSLKKAGVEEAERVLASWLDIEIKQKENKGPPDKGSPGAKMP.

The EngB-type G domain maps to 23-199; the sequence is SVREVAFAGR…ERVLASWLDI (177 aa). Mg(2+) contacts are provided by S38 and T60.

Belongs to the TRAFAC class TrmE-Era-EngA-EngB-Septin-like GTPase superfamily. EngB GTPase family. Mg(2+) is required as a cofactor.

In terms of biological role, necessary for normal cell division and for the maintenance of normal septation. The protein is Probable GTP-binding protein EngB of Dechloromonas aromatica (strain RCB).